A 565-amino-acid chain; its full sequence is Oxygen-dependent choline dehydrogenase (565 aa).

6–35 (DYIIVGAGSAGNTLATRLTEDASVSVLLLE) contacts FAD. The segment at 182-203 (QQEGFGPMDRSVTKKGRRSSTA) is disordered. His475 (proton acceptor) is an active-site residue.

It belongs to the GMC oxidoreductase family. FAD is required as a cofactor.

It carries out the reaction choline + A = betaine aldehyde + AH2. It catalyses the reaction betaine aldehyde + NAD(+) + H2O = glycine betaine + NADH + 2 H(+). The protein operates within amine and polyamine biosynthesis; betaine biosynthesis via choline pathway; betaine aldehyde from choline (cytochrome c reductase route): step 1/1. In terms of biological role, involved in the biosynthesis of the osmoprotectant glycine betaine. Catalyzes the oxidation of choline to betaine aldehyde and betaine aldehyde to glycine betaine at the same rate. The chain is Oxygen-dependent choline dehydrogenase from Pseudomonas entomophila (strain L48).